The primary structure comprises 327 residues: 2-keto-3-deoxygluconate permease (327 aa).

10 helical membrane passes run 10-30, 42-62, 73-93, 95-115, 139-159, 163-183, 199-219, 224-244, 254-274, and 289-309; these read IPGGMMLVPLFLGALCHTFSP, GMITGTVPILAVWFFCMGASI, KSGTLVVTKIAVAWVVAAIAS, IIPEHGVEVGFFAGLSTLALV, AGAFVLMSLESGPLMTMIILG, IASFEPHVFVGAVLPFLVGFA, VQTLIPFFAFALGNTIDLTVI, LLGILLGVAVIIVTGIPLIIA, TAGIAASSSAGAAVATPVLIA, and SLVATAVIVTSILVPILTSIW.

Belongs to the KdgT transporter family.

It is found in the cell inner membrane. The catalysed reaction is 2-dehydro-3-deoxy-D-gluconate(in) + H(+)(in) = 2-dehydro-3-deoxy-D-gluconate(out) + H(+)(out). In terms of biological role, catalyzes the proton-dependent uptake of 2-keto-3-deoxygluconate (KDG) into the cell. The polypeptide is 2-keto-3-deoxygluconate permease (Escherichia coli O157:H7).